The primary structure comprises 369 residues: Mitogen-activated protein kinase 5 (369 aa).

In terms of domain architecture, Protein kinase spans 36-322; that stretch reads QPPIMPIGRG…VEEALDHPYL (287 aa). ATP-binding positions include 42–50 and K65; that span reads IGRGAYGIV. D162 serves as the catalytic Proton acceptor. Phosphothreonine is present on T194. The TXY motif lies at 194-196; that stretch reads TEY. Y196 carries the post-translational modification Phosphotyrosine.

It belongs to the protein kinase superfamily. CMGC Ser/Thr protein kinase family. MAP kinase subfamily. Interacts with MKK1. In terms of processing, dually phosphorylated on Thr-194 and Tyr-196, which activates the enzyme.

The catalysed reaction is L-seryl-[protein] + ATP = O-phospho-L-seryl-[protein] + ADP + H(+). The enzyme catalyses L-threonyl-[protein] + ATP = O-phospho-L-threonyl-[protein] + ADP + H(+). With respect to regulation, activated by threonine and tyrosine phosphorylation. Involved in disease resistance and abiotic stress tolerance signaling pathways. In Oryza sativa subsp. indica (Rice), this protein is Mitogen-activated protein kinase 5 (MPK5).